The following is a 200-amino-acid chain: Orotate phosphoribosyltransferase (200 aa).

5-phospho-alpha-D-ribose 1-diphosphate is bound by residues arginine 95, lysine 99, histidine 101, and 121–129; that span reads DDVATTGGS. Orotate-binding residues include threonine 125 and arginine 153.

This sequence belongs to the purine/pyrimidine phosphoribosyltransferase family. PyrE subfamily. As to quaternary structure, homodimer. It depends on Mg(2+) as a cofactor.

It catalyses the reaction orotidine 5'-phosphate + diphosphate = orotate + 5-phospho-alpha-D-ribose 1-diphosphate. The protein operates within pyrimidine metabolism; UMP biosynthesis via de novo pathway; UMP from orotate: step 1/2. Its function is as follows. Catalyzes the transfer of a ribosyl phosphate group from 5-phosphoribose 1-diphosphate to orotate, leading to the formation of orotidine monophosphate (OMP). This is Orotate phosphoribosyltransferase from Cenarchaeum symbiosum (strain A).